Consider the following 341-residue polypeptide: Probable electron transfer flavoprotein subunit alpha, mitochondrial (341 aa).

285-313 contacts FAD; that stretch reads LYIAVGIDGAIQHLAGIKDSKVIAAINRD.

Belongs to the ETF alpha-subunit/FixB family. In terms of assembly, heterodimer of an alpha and a beta subunit. It depends on FAD as a cofactor.

The protein localises to the mitochondrion matrix. Functionally, the electron transfer flavoprotein serves as a specific electron acceptor for several dehydrogenases, including five acyl-CoA dehydrogenases, glutaryl-CoA and sarcosine dehydrogenase. It transfers the electrons to the main mitochondrial respiratory chain via ETF-ubiquinone oxidoreductase (ETF dehydrogenase). The chain is Probable electron transfer flavoprotein subunit alpha, mitochondrial from Schizosaccharomyces pombe (strain 972 / ATCC 24843) (Fission yeast).